A 224-amino-acid chain; its full sequence is Processed variable antigen (224 aa).

17 repeat units span residues 1–6, 7–12, 13–18, 19–24, 25–30, 31–36, 37–42, 43–48, 49–54, 55–60, 61–66, 67–72, 73–78, 79–84, 85–90, 91–96, and 97–102. Residues 1–102 form a 17 X 6 AA tandem repeats of E-T-G-E-S-K region; that stretch reads ETGESKETGE…GESKETGESK (102 aa). Over residues 1 to 137 the composition is skewed to basic and acidic residues; it reads ETGESKETGE…TEESKDREGN (137 aa). Residues 1–224 are disordered; the sequence is ETGESKETGE…KKADNKKKKK (224 aa). Over residues 144 to 153 the composition is skewed to low complexity; it reads ENSENSNVTS. Basic and acidic residues-rich tracts occupy residues 156–173 and 185–217; these read EETK…EKLG and EDPK…EKKA.

This Plasmodium falciparum protein is Processed variable antigen.